We begin with the raw amino-acid sequence, 105 residues long: Met repressor (105 aa).

The protein belongs to the MetJ family. In terms of assembly, homodimer.

It is found in the cytoplasm. Functionally, this regulatory protein, when combined with SAM (S-adenosylmethionine) represses the expression of the methionine regulon and of enzymes involved in SAM synthesis. The protein is Met repressor of Actinobacillus succinogenes (strain ATCC 55618 / DSM 22257 / CCUG 43843 / 130Z).